The primary structure comprises 147 residues: Putative pre-16S rRNA nuclease (147 aa).

The protein belongs to the YqgF nuclease family.

It is found in the cytoplasm. Could be a nuclease involved in processing of the 5'-end of pre-16S rRNA. The sequence is that of Putative pre-16S rRNA nuclease from Ureaplasma parvum serovar 3 (strain ATCC 27815 / 27 / NCTC 11736).